We begin with the raw amino-acid sequence, 145 residues long: Mannitol-specific phosphotransferase enzyme IIA component (145 aa).

In terms of domain architecture, PTS EIIA type-2 spans 4–144 (PILKKENIVL…EEILSILNEV (141 aa)). H64 serves as the catalytic Tele-phosphohistidine intermediate. H64 carries the phosphohistidine; by HPr modification.

The protein localises to the cytoplasm. Its function is as follows. The phosphoenolpyruvate-dependent sugar phosphotransferase system (sugar PTS), a major carbohydrate active transport system, catalyzes the phosphorylation of incoming sugar substrates concomitantly with their translocation across the cell membrane. The enzyme II CmtAB PTS system is involved in D-mannitol transport. This chain is Mannitol-specific phosphotransferase enzyme IIA component, found in Geobacillus stearothermophilus (Bacillus stearothermophilus).